Reading from the N-terminus, the 644-residue chain is Chaperone protein DnaK (644 aa).

At T195 the chain carries Phosphothreonine; by autocatalysis. The interval 598-644 (KQAAPGAGAPGAGPGPEAAGGAQQAQAEPKKDEGVIDAEYVDVDEKK) is disordered. Low complexity predominate over residues 612–624 (GPEAAGGAQQAQA). Residues 632 to 644 (VIDAEYVDVDEKK) are compositionally biased toward acidic residues.

This sequence belongs to the heat shock protein 70 family.

Acts as a chaperone. The sequence is that of Chaperone protein DnaK from Koribacter versatilis (strain Ellin345).